The primary structure comprises 205 residues: NAD(P)H-quinone oxidoreductase subunit 6, organellar chromatophore (205 aa).

5 helical membrane-spanning segments follow: residues 9–29 (LICF…VVLL), 32–52 (IVYS…LYLL), 61–81 (AQVL…IMLV), 90–110 (IPGL…LLVI), and 145–165 (LLPF…AIVL).

This sequence belongs to the complex I subunit 6 family. In terms of assembly, NDH is composed of at least 16 different subunits, 5 of which are encoded in the nucleus.

The protein localises to the plastid. Its subcellular location is the organellar chromatophore thylakoid membrane. It catalyses the reaction a plastoquinone + NADH + (n+1) H(+)(in) = a plastoquinol + NAD(+) + n H(+)(out). The enzyme catalyses a plastoquinone + NADPH + (n+1) H(+)(in) = a plastoquinol + NADP(+) + n H(+)(out). In terms of biological role, NDH shuttles electrons from NAD(P)H:plastoquinone, via FMN and iron-sulfur (Fe-S) centers, to quinones in the photosynthetic chain and possibly in a chloroplast respiratory chain. The immediate electron acceptor for the enzyme in this species is believed to be plastoquinone. Couples the redox reaction to proton translocation, and thus conserves the redox energy in a proton gradient. This is NAD(P)H-quinone oxidoreductase subunit 6, organellar chromatophore (ndhG) from Paulinella chromatophora.